We begin with the raw amino-acid sequence, 284 residues long: Protein phosphatase 1 regulatory subunit 3B (284 aa).

Residues 61-64 (RVSF) carry the PP1-binding motif motif. A CBM21 domain is found at 124–232 (RNRLQTDHVC…SNKGKNYRII (109 aa)). A Phosphoserine modification is found at Ser-260.

As to quaternary structure, interacts with glycogen, PPP1CC catalytic subunit of PP1 and PYGL. Associates with glycogen particles. Forms complexes with debranching enzyme, glycogen phosphorylase, glycogen synthase and phosphorylase kinase which is necessary for its regulation of PP1 activity.

Functionally, acts as a glycogen-targeting subunit for phosphatase PP1. Facilitates interaction of the PP1 with enzymes of the glycogen metabolism and regulates its activity. Suppresses the rate at which PP1 dephosphorylates (inactivates) glycogen phosphorylase and enhances the rate at which it activates glycogen synthase and therefore limits glycogen breakdown. Its activity is inhibited by PYGL, resulting in inhibition of the glycogen synthase and glycogen phosphorylase phosphatase activities of PP1. Dramatically increases basal and insulin-stimulated glycogen synthesis upon overexpression in hepatocytes. The protein is Protein phosphatase 1 regulatory subunit 3B (PPP1R3B) of Bos taurus (Bovine).